Here is a 499-residue protein sequence, read N- to C-terminus: Uridine-cytidine kinase A (499 aa).

The disordered stretch occupies residues 1 to 44 (MSDNSTTKVTTNDSPSLTTTTSTTTAPTTTTTTTTTPTHNHDTT). Positions 10–38 (TTNDSPSLTTTTSTTTAPTTTTTTTTTPT) are enriched in low complexity. 78–85 (GGSASGKT) provides a ligand contact to ATP.

The protein belongs to the uridine kinase family.

It catalyses the reaction uridine + ATP = UMP + ADP + H(+). It carries out the reaction cytidine + ATP = CMP + ADP + H(+). It participates in pyrimidine metabolism; CTP biosynthesis via salvage pathway; CTP from cytidine: step 1/3. Its pathway is pyrimidine metabolism; UMP biosynthesis via salvage pathway; UMP from uridine: step 1/1. Its function is as follows. Catalyzes the conversion of uridine into uridine monophosphate and cytidine into cytidine monophosphate in the pyrimidine salvage pathway. The sequence is that of Uridine-cytidine kinase A (udkA) from Dictyostelium discoideum (Social amoeba).